Reading from the N-terminus, the 139-residue chain is Large ribosomal subunit protein bL17 (139 aa).

The interval 120–139 (EDAKGRDSGPTQDNSEAEAA) is disordered.

Part of the 50S ribosomal subunit. Contacts protein L32. Post-translationally, may be methylated thrice, on undetermined residues.

The chain is Large ribosomal subunit protein bL17 from Rhodopseudomonas palustris (strain ATCC BAA-98 / CGA009).